The following is a 945-amino-acid chain: Isoleucine--tRNA ligase (945 aa).

The 'HIGH' region signature appears at 66 to 76 (PYANGDIHLGH). Glu581 contributes to the L-isoleucyl-5'-AMP binding site. Residues 622–626 (KMSKS) carry the 'KMSKS' region motif. Lys625 contributes to the ATP binding site. Positions 908, 911, 928, and 931 each coordinate Zn(2+).

The protein belongs to the class-I aminoacyl-tRNA synthetase family. IleS type 1 subfamily. Monomer. Requires Zn(2+) as cofactor.

It localises to the cytoplasm. It carries out the reaction tRNA(Ile) + L-isoleucine + ATP = L-isoleucyl-tRNA(Ile) + AMP + diphosphate. Its function is as follows. Catalyzes the attachment of isoleucine to tRNA(Ile). As IleRS can inadvertently accommodate and process structurally similar amino acids such as valine, to avoid such errors it has two additional distinct tRNA(Ile)-dependent editing activities. One activity is designated as 'pretransfer' editing and involves the hydrolysis of activated Val-AMP. The other activity is designated 'posttransfer' editing and involves deacylation of mischarged Val-tRNA(Ile). The protein is Isoleucine--tRNA ligase of Burkholderia cenocepacia (strain HI2424).